Here is a 449-residue protein sequence, read N- to C-terminus: Gamma-glutamyl phosphate reductase (449 aa).

Belongs to the gamma-glutamyl phosphate reductase family.

The protein resides in the cytoplasm. The catalysed reaction is L-glutamate 5-semialdehyde + phosphate + NADP(+) = L-glutamyl 5-phosphate + NADPH + H(+). It functions in the pathway amino-acid biosynthesis; L-proline biosynthesis; L-glutamate 5-semialdehyde from L-glutamate: step 2/2. Catalyzes the NADPH-dependent reduction of L-glutamate 5-phosphate into L-glutamate 5-semialdehyde and phosphate. The product spontaneously undergoes cyclization to form 1-pyrroline-5-carboxylate. The sequence is that of Gamma-glutamyl phosphate reductase from Methanococcoides burtonii (strain DSM 6242 / NBRC 107633 / OCM 468 / ACE-M).